We begin with the raw amino-acid sequence, 333 residues long: tRNA(Ile)-lysidine synthase (333 aa).

Position 25–30 (Ser25–Ser30) interacts with ATP.

Belongs to the tRNA(Ile)-lysidine synthase family.

The protein resides in the cytoplasm. It carries out the reaction cytidine(34) in tRNA(Ile2) + L-lysine + ATP = lysidine(34) in tRNA(Ile2) + AMP + diphosphate + H(+). In terms of biological role, ligates lysine onto the cytidine present at position 34 of the AUA codon-specific tRNA(Ile) that contains the anticodon CAU, in an ATP-dependent manner. Cytidine is converted to lysidine, thus changing the amino acid specificity of the tRNA from methionine to isoleucine. This Ureaplasma parvum serovar 3 (strain ATCC 700970) protein is tRNA(Ile)-lysidine synthase.